The chain runs to 226 residues: MGNTSDDDKILSYEDVVLRRSDLDILNGPIFLNDRVIEFYLSFLSTVHSSTTISLIPPSIAFWISNCPDTEYLKDFMKPLNLRDKDLLILPVNDNSNVEVAEGGLHWSLLVYYKEANTFVHHDSYMGVNRWSAKQLFKAVSPFVSNGDASYKECTDTPQQKNGYDCGVFLLATARVICEWFSSGGMKNRDELWFANVKETVPDLVNHLREEILALIKKLMSESVSK.

Belongs to the peptidase C48 family.

Processes the pre-form of the ubiquitin-like protein NEDD8/RUB1. Has the capacity to discriminate between NEDD8/RUB1 and ubiquitin. Has no SUMO protease activity. This Arabidopsis thaliana (Mouse-ear cress) protein is NEDD8-specific protease 1 (NEDP1).